The sequence spans 206 residues: dITP/XTP pyrophosphatase (206 aa).

10-15 lines the substrate pocket; it reads SRNAKK. The active-site Proton acceptor is D75. D75 contacts Mg(2+). Residues S76, 158–161, K181, and 186–187 contribute to the substrate site; these read FGYD and HR.

Belongs to the HAM1 NTPase family. As to quaternary structure, homodimer. Requires Mg(2+) as cofactor.

It carries out the reaction XTP + H2O = XMP + diphosphate + H(+). It catalyses the reaction dITP + H2O = dIMP + diphosphate + H(+). The enzyme catalyses ITP + H2O = IMP + diphosphate + H(+). Its function is as follows. Pyrophosphatase that catalyzes the hydrolysis of nucleoside triphosphates to their monophosphate derivatives, with a high preference for the non-canonical purine nucleotides XTP (xanthosine triphosphate), dITP (deoxyinosine triphosphate) and ITP. Seems to function as a house-cleaning enzyme that removes non-canonical purine nucleotides from the nucleotide pool, thus preventing their incorporation into DNA/RNA and avoiding chromosomal lesions. The sequence is that of dITP/XTP pyrophosphatase from Nocardia farcinica (strain IFM 10152).